Reading from the N-terminus, the 216-residue chain is Octanoyltransferase (216 aa).

The BPL/LPL catalytic domain occupies 31–205 (STTRDEVWLV…ELVTLLDYEQ (175 aa)). Residues 70–77 (RGGQVTYH), 137–139 (SLG), and 150–152 (GLA) contribute to the substrate site. Catalysis depends on cysteine 168, which acts as the Acyl-thioester intermediate.

This sequence belongs to the LipB family.

The protein localises to the cytoplasm. It catalyses the reaction octanoyl-[ACP] + L-lysyl-[protein] = N(6)-octanoyl-L-lysyl-[protein] + holo-[ACP] + H(+). The protein operates within protein modification; protein lipoylation via endogenous pathway; protein N(6)-(lipoyl)lysine from octanoyl-[acyl-carrier-protein]: step 1/2. Functionally, catalyzes the transfer of endogenously produced octanoic acid from octanoyl-acyl-carrier-protein onto the lipoyl domains of lipoate-dependent enzymes. Lipoyl-ACP can also act as a substrate although octanoyl-ACP is likely to be the physiological substrate. This Vibrio cholerae serotype O1 (strain ATCC 39541 / Classical Ogawa 395 / O395) protein is Octanoyltransferase.